Reading from the N-terminus, the 352-residue chain is C-X-C chemokine receptor type 4 (352 aa).

Residues 1 to 21 (MEGISIYTSDNYTEEMGSGDY) form an important for chemokine binding and signaling region. Residues 1–38 (MEGISIYTSDNYTEEMGSGDYDSIKEPCFREENAHFNR) are Extracellular-facing. A Sulfotyrosine modification is found at tyrosine 7. Residue asparagine 11 is glycosylated (N-linked (GlcNAc...) asparagine). Residue tyrosine 12 is modified to Sulfotyrosine. An O-linked (Xyl...) (chondroitin sulfate) serine glycan is attached at serine 18. At tyrosine 21 the chain carries Sulfotyrosine. Intrachain disulfides connect cysteine 28–cysteine 274 and cysteine 109–cysteine 186. Residues 39–63 (IFLPTIYSIIFLTGIVGNGLVILVM) traverse the membrane as a helical segment. Residues 64-77 (GYQKKLRSMTDKYR) are Cytoplasmic-facing. Residues 78–99 (LHLSVADLLFVITLPFWAVDAV) traverse the membrane as a helical segment. The segment at 94 to 97 (WAVD) is chemokine binding. Residues 100–110 (ANWYFGNFLCK) lie on the Extracellular side of the membrane. Residues 111 to 130 (AVHVIYTVNLYSSVLILAFI) form a helical membrane-spanning segment. The tract at residues 113–117 (HVIYT) is chemokine binding. At 131–154 (SLDRYLAIVHATNSQKPRKLLAEK) the chain is on the cytoplasmic side. The Important for signaling motif lies at 133 to 135 (DRY). Residues 135–147 (YLAIVHATNSQKP) are involved in dimerization; when bound to chemokine. The chain crosses the membrane as a helical span at residues 155–174 (VVYVGVWIPALLLTIPDFIF). Residues 175 to 195 (ASVSEADDRYICDRFYPNDLW) are Extracellular-facing. The chemokine binding, important for signaling stretch occupies residues 186 to 190 (CDRFY). Residues 191 to 210 (PNDLWVVVFQFQHIMVGLIL) form an involved in dimerization region. The helical transmembrane segment at 196–216 (VVVFQFQHIMVGLILPGIVIL) threads the bilayer. Topologically, residues 217-241 (SCYCIIISKLSHSKGHQKRKALKTT) are cytoplasmic. The chain crosses the membrane as a helical span at residues 242–261 (VILILAFFACWLPYYIGISI). At 262 to 282 (DSFILLEIIKQGCEFENTVHK) the chain is on the extracellular side. The segment at 266-268 (LLE) is involved in dimerization. The chain crosses the membrane as a helical span at residues 283–302 (WISITEALAFFHCCLNPILY). Residues 303-352 (AFLGAKFKTSAQHALTSVSRGSSLKILSKGKRGGHSSVSTESESSSFHSS) are Cytoplasmic-facing. Serine 319 and serine 321 each carry phosphoserine. Serine 324 and serine 325 each carry phosphoserine; by PKC and GRK6. Positions 329–352 (LSKGKRGGHSSVSTESESSSFHSS) are disordered. Position 330 is a phosphoserine; by GRK6 (serine 330). A Glycyl lysine isopeptide (Lys-Gly) (interchain with G-Cter in ubiquitin) cross-link involves residue lysine 331. Over residues 337-352 (HSSVSTESESSSFHSS) the composition is skewed to low complexity. Residue serine 339 is modified to Phosphoserine; by GRK6. Serine 348 and serine 351 each carry phosphoserine.

Belongs to the G-protein coupled receptor 1 family. As to quaternary structure, monomer. Can form homodimers. Interacts with CD164. Interacts with ARRB2; the interaction is dependent on the C-terminal phosphorylation of CXCR4 and allows activation of MAPK1 and MAPK3. Interacts with ARR3; the interaction is dependent on the C-terminal phosphorylation of CXCR4 and modulates calcium mobilization. Interacts with RNF113A; the interaction, enhanced by CXCL12, promotes CXCR4 ubiquitination and subsequent degradation. Interacts (via the cytoplasmic C-terminal) with ITCH (via the WW domains I and II); the interaction, enhanced by CXCL12, promotes CXCR4 ubiquitination and leads to its degradation. Interacts with extracellular ubiquitin. Interacts with DBN1; this interaction is enhanced by antigenic stimulation. Following LPS binding, may form a complex with GDF5, HSP90AA1 and HSPA8. Post-translationally, phosphorylated on agonist stimulation. Rapidly phosphorylated on serine and threonine residues in the C-terminal. Phosphorylation at Ser-324 and Ser-325 leads to recruitment of ITCH, ubiquitination and protein degradation. In terms of processing, ubiquitinated after ligand binding, leading to its degradation. Ubiquitinated by ITCH at the cell membrane on agonist stimulation. The ubiquitin-dependent mechanism, endosomal sorting complex required for transport (ESCRT), then targets CXCR4 for lysosomal degradation. This process is dependent also on prior Ser-/Thr-phosphorylation in the C-terminal of CXCR4. Also binding of ARRB1 to STAM negatively regulates CXCR4 sorting to lysosomes though modulating ubiquitination of SFR5S. Sulfation is required for efficient binding of CXCL12/SDF-1alpha and promotes its dimerization. Post-translationally, O- and N-glycosylated. N-glycosylation can mask coreceptor function. The O-glycosylation chondroitin sulfate attachment does not affect interaction with CXCL12/SDF-1alpha nor its coreceptor activity.

It localises to the cell membrane. The protein localises to the cell junction. The protein resides in the early endosome. It is found in the late endosome. Its subcellular location is the lysosome. Its function is as follows. Receptor for the C-X-C chemokine CXCL12/SDF-1 that transduces a signal by increasing intracellular calcium ion levels and enhancing MAPK1/MAPK3 activation. Involved in the AKT signaling cascade. Plays a role in regulation of cell migration, e.g. during wound healing. Acts as a receptor for extracellular ubiquitin; leading to enhanced intracellular calcium ions and reduced cellular cAMP levels. Binds bacterial lipopolysaccharide (LPS) et mediates LPS-induced inflammatory response, including TNF secretion by monocytes. Involved in hematopoiesis and in cardiac ventricular septum formation. Also plays an essential role in vascularization of the gastrointestinal tract, probably by regulating vascular branching and/or remodeling processes in endothelial cells. Involved in cerebellar development. In the CNS, could mediate hippocampal-neuron survival. This is C-X-C chemokine receptor type 4 (CXCR4) from Macaca fascicularis (Crab-eating macaque).